Consider the following 366-residue polypeptide: DNA integrity scanning protein DisA (366 aa).

Residues 21-159 enclose the DAC domain; that stretch reads VHTLKGTLQR…EGKSHMLEQP (139 aa). ATP is bound by residues G88, L106, and 119-123; that span reads TRHRS.

This sequence belongs to the DisA family. As to quaternary structure, homooctamer. Mg(2+) serves as cofactor.

It carries out the reaction 2 ATP = 3',3'-c-di-AMP + 2 diphosphate. Its function is as follows. Participates in a DNA-damage check-point. DisA forms globular foci that rapidly scan along the chromosomes searching for lesions. In terms of biological role, also has diadenylate cyclase activity, catalyzing the condensation of 2 ATP molecules into cyclic di-AMP (c-di-AMP). c-di-AMP likely acts as a signaling molecule that may couple DNA integrity with a cellular process. This is DNA integrity scanning protein DisA from Corynebacterium glutamicum (strain ATCC 13032 / DSM 20300 / JCM 1318 / BCRC 11384 / CCUG 27702 / LMG 3730 / NBRC 12168 / NCIMB 10025 / NRRL B-2784 / 534).